The primary structure comprises 437 residues: Trigger factor (437 aa).

The 87-residue stretch at 174 to 260 folds into the PPIase FKBP-type domain; sequence GDFVQISFEG…VKSLKKKIFP (87 aa).

It belongs to the FKBP-type PPIase family. Tig subfamily.

It is found in the cytoplasm. The catalysed reaction is [protein]-peptidylproline (omega=180) = [protein]-peptidylproline (omega=0). Involved in protein export. Acts as a chaperone by maintaining the newly synthesized protein in an open conformation. Functions as a peptidyl-prolyl cis-trans isomerase. This is Trigger factor from Koribacter versatilis (strain Ellin345).